The chain runs to 577 residues: Protein O-linked-mannose beta-1,4-N-acetylglucosaminyltransferase 2 (577 aa).

Topologically, residues 1 to 4 (MNIA) are cytoplasmic. Residues 5 to 25 (AVFNALLVSVLATVLWKYIKL) form a helical; Signal-anchor for type II membrane protein membrane-spanning segment. Residues 26–577 (REHAFMVEEE…PFADVLLCST (552 aa)) lie on the Lumenal side of the membrane. N-linked (GlcNAc...) asparagine glycosylation is found at asparagine 98, asparagine 275, asparagine 335, and asparagine 540. Residues 481 to 577 (KVRDARCQAS…PFADVLLCST (97 aa)) enclose the Fibronectin type-III domain.

Belongs to the glycosyltransferase 61 family.

It is found in the endoplasmic reticulum membrane. It catalyses the reaction 3-O-(alpha-D-mannosyl)-L-threonyl-[protein] + UDP-N-acetyl-alpha-D-glucosamine = 3-O-(N-acetyl-beta-D-glucosaminyl-(1-&gt;4)-alpha-D-mannosyl)-L-threonyl-[protein] + UDP + H(+). The protein operates within protein modification; protein glycosylation. Its function is as follows. O-linked mannose beta-1,4-N-acetylglucosaminyltransferase that transfers UDP-N-acetyl-D-glucosamine to the 4-position of the mannose to generate N-acetyl-D-glucosamine-beta-1,4-O-D-mannosylprotein. Involved in the biosynthesis of the phosphorylated O-mannosyl trisaccharide (N-acetylgalactosamine-beta-3-N-acetylglucosamine-beta-4-(phosphate-6-)mannose), a carbohydrate structure present in alpha-dystroglycan (DAG1), which is required for binding laminin G-like domain-containing extracellular proteins with high affinity. This Gallus gallus (Chicken) protein is Protein O-linked-mannose beta-1,4-N-acetylglucosaminyltransferase 2 (POMGNT2).